A 201-amino-acid chain; its full sequence is 3-isopropylmalate dehydratase small subunit (201 aa).

It belongs to the LeuD family. LeuD type 1 subfamily. Heterodimer of LeuC and LeuD.

The catalysed reaction is (2R,3S)-3-isopropylmalate = (2S)-2-isopropylmalate. It participates in amino-acid biosynthesis; L-leucine biosynthesis; L-leucine from 3-methyl-2-oxobutanoate: step 2/4. Catalyzes the isomerization between 2-isopropylmalate and 3-isopropylmalate, via the formation of 2-isopropylmaleate. The sequence is that of 3-isopropylmalate dehydratase small subunit from Glaesserella parasuis serovar 5 (strain SH0165) (Haemophilus parasuis).